The chain runs to 571 residues: Proline--tRNA ligase (571 aa).

It belongs to the class-II aminoacyl-tRNA synthetase family. ProS type 1 subfamily. In terms of assembly, homodimer.

Its subcellular location is the cytoplasm. The enzyme catalyses tRNA(Pro) + L-proline + ATP = L-prolyl-tRNA(Pro) + AMP + diphosphate. Functionally, catalyzes the attachment of proline to tRNA(Pro) in a two-step reaction: proline is first activated by ATP to form Pro-AMP and then transferred to the acceptor end of tRNA(Pro). As ProRS can inadvertently accommodate and process non-cognate amino acids such as alanine and cysteine, to avoid such errors it has two additional distinct editing activities against alanine. One activity is designated as 'pretransfer' editing and involves the tRNA(Pro)-independent hydrolysis of activated Ala-AMP. The other activity is designated 'posttransfer' editing and involves deacylation of mischarged Ala-tRNA(Pro). The misacylated Cys-tRNA(Pro) is not edited by ProRS. This is Proline--tRNA ligase from Pseudomonas putida (strain ATCC 700007 / DSM 6899 / JCM 31910 / BCRC 17059 / LMG 24140 / F1).